The primary structure comprises 113 residues: Hydrogenase maturation factor HypA (113 aa).

H2 serves as a coordination point for Ni(2+). Zn(2+) contacts are provided by C73, C76, C89, and C92.

This sequence belongs to the HypA/HybF family.

In terms of biological role, involved in the maturation of [NiFe] hydrogenases. Required for nickel insertion into the metal center of the hydrogenase. The sequence is that of Hydrogenase maturation factor HypA from Azotobacter chroococcum mcd 1.